The primary structure comprises 259 residues: Ribosomal RNA small subunit methyltransferase J (259 aa).

Residues 101–102 (RD), 117–118 (ER), 153–154 (SS), and D176 contribute to the S-adenosyl-L-methionine site.

It belongs to the methyltransferase superfamily. RsmJ family.

The protein localises to the cytoplasm. The enzyme catalyses guanosine(1516) in 16S rRNA + S-adenosyl-L-methionine = N(2)-methylguanosine(1516) in 16S rRNA + S-adenosyl-L-homocysteine + H(+). In terms of biological role, specifically methylates the guanosine in position 1516 of 16S rRNA. In Vibrio vulnificus (strain CMCP6), this protein is Ribosomal RNA small subunit methyltransferase J.